Reading from the N-terminus, the 490-residue chain is GTPase Der (490 aa).

EngA-type G domains follow at residues 3 to 166 (PVVA…MEDL) and 203 to 376 (IKLA…DSST). GTP contacts are provided by residues 9-16 (GRPNVGKS), 56-60 (DTGGI), 118-121 (NKTD), 209-216 (GRPNVGKS), 256-260 (DTAGV), and 321-324 (NKWD). A KH-like domain is found at 377 to 461 (RRVGTSMLTR…PIRIQFKEGE (85 aa)).

Belongs to the TRAFAC class TrmE-Era-EngA-EngB-Septin-like GTPase superfamily. EngA (Der) GTPase family. As to quaternary structure, associates with the 50S ribosomal subunit.

GTPase that plays an essential role in the late steps of ribosome biogenesis. In Escherichia coli O17:K52:H18 (strain UMN026 / ExPEC), this protein is GTPase Der.